We begin with the raw amino-acid sequence, 639 residues long: Threonine--tRNA ligase (639 aa).

Positions 1 to 61 (MIHITLPDGS…TQDSPLSIVT (61 aa)) constitute a TGS domain. A catalytic region spans residues 242 to 533 (DHRKLGRELD…LIEEHAGALP (292 aa)). 3 residues coordinate Zn(2+): Cys-333, His-384, and His-510.

Belongs to the class-II aminoacyl-tRNA synthetase family. As to quaternary structure, homodimer. It depends on Zn(2+) as a cofactor.

It localises to the cytoplasm. It catalyses the reaction tRNA(Thr) + L-threonine + ATP = L-threonyl-tRNA(Thr) + AMP + diphosphate + H(+). Functionally, catalyzes the attachment of threonine to tRNA(Thr) in a two-step reaction: L-threonine is first activated by ATP to form Thr-AMP and then transferred to the acceptor end of tRNA(Thr). Also edits incorrectly charged L-seryl-tRNA(Thr). This Acidovorax sp. (strain JS42) protein is Threonine--tRNA ligase.